Here is a 150-residue protein sequence, read N- to C-terminus: Cytochrome c oxidase subunit 5A, mitochondrial (150 aa).

The N-terminal 41 residues, 1–41 (MLGAALRRCAVAATTRAGPRGLLHSARTPGPAAAIQSVRCY), are a transit peptide targeting the mitochondrion. The short motif at 2–17 (LGAALRRCAVAATTRA) is the SIFI-degron element. Lys87 and Lys113 each carry N6-acetyllysine. Thr141 is modified (phosphothreonine).

This sequence belongs to the cytochrome c oxidase subunit 5A family. As to quaternary structure, component of the cytochrome c oxidase (complex IV, CIV), a multisubunit enzyme composed of 14 subunits. The complex is composed of a catalytic core of 3 subunits MT-CO1, MT-CO2 and MT-CO3, encoded in the mitochondrial DNA, and 11 supernumerary subunits COX4I, COX5A, COX5B, COX6A, COX6B, COX6C, COX7A, COX7B, COX7C, COX8 and NDUFA4, which are encoded in the nuclear genome. The complex exists as a monomer or a dimer and forms supercomplexes (SCs) in the inner mitochondrial membrane with NADH-ubiquinone oxidoreductase (complex I, CI) and ubiquinol-cytochrome c oxidoreductase (cytochrome b-c1 complex, complex III, CIII), resulting in different assemblies (supercomplex SCI(1)III(2)IV(1) and megacomplex MCI(2)III(2)IV(2)). Interacts with AFG1L. Interacts with RAB5IF. In response to mitochondrial stress, the precursor protein is ubiquitinated by the SIFI complex in the cytoplasm before mitochondrial import, leading to its degradation. Within the SIFI complex, UBR4 initiates ubiquitin chain that are further elongated or branched by KCMF1.

The protein resides in the mitochondrion inner membrane. It participates in energy metabolism; oxidative phosphorylation. Component of the cytochrome c oxidase, the last enzyme in the mitochondrial electron transport chain which drives oxidative phosphorylation. The respiratory chain contains 3 multisubunit complexes succinate dehydrogenase (complex II, CII), ubiquinol-cytochrome c oxidoreductase (cytochrome b-c1 complex, complex III, CIII) and cytochrome c oxidase (complex IV, CIV), that cooperate to transfer electrons derived from NADH and succinate to molecular oxygen, creating an electrochemical gradient over the inner membrane that drives transmembrane transport and the ATP synthase. Cytochrome c oxidase is the component of the respiratory chain that catalyzes the reduction of oxygen to water. Electrons originating from reduced cytochrome c in the intermembrane space (IMS) are transferred via the dinuclear copper A center (CU(A)) of subunit 2 and heme A of subunit 1 to the active site in subunit 1, a binuclear center (BNC) formed by heme A3 and copper B (CU(B)). The BNC reduces molecular oxygen to 2 water molecules using 4 electrons from cytochrome c in the IMS and 4 protons from the mitochondrial matrix. The protein is Cytochrome c oxidase subunit 5A, mitochondrial (COX5A) of Gorilla gorilla gorilla (Western lowland gorilla).